The following is a 118-amino-acid chain: Fluoride-specific ion channel FluC 1 (118 aa).

The next 2 membrane-spanning stretches (helical) occupy residues Met-1–Val-21 and Phe-29–Gly-49. Gly-71 and Thr-74 together coordinate Na(+). The chain crosses the membrane as a helical span at residues Leu-95–Tyr-115.

The protein belongs to the fluoride channel Fluc/FEX (TC 1.A.43) family.

The protein localises to the cell membrane. The enzyme catalyses fluoride(in) = fluoride(out). With respect to regulation, na(+) is not transported, but it plays an essential structural role and its presence is essential for fluoride channel function. In terms of biological role, fluoride-specific ion channel. Important for reducing fluoride concentration in the cell, thus reducing its toxicity. The chain is Fluoride-specific ion channel FluC 1 from Staphylococcus saprophyticus subsp. saprophyticus (strain ATCC 15305 / DSM 20229 / NCIMB 8711 / NCTC 7292 / S-41).